The following is a 182-amino-acid chain: Bifunctional protein PyrR (182 aa).

The PRPP-binding signature appears at 99-111 (IVLVDDVLFTGRT).

It belongs to the purine/pyrimidine phosphoribosyltransferase family. PyrR subfamily. As to quaternary structure, homodimer and homohexamer; in equilibrium.

The enzyme catalyses UMP + diphosphate = 5-phospho-alpha-D-ribose 1-diphosphate + uracil. Functionally, regulates transcriptional attenuation of the pyrimidine nucleotide (pyr) operon by binding in a uridine-dependent manner to specific sites on pyr mRNA. This disrupts an antiterminator hairpin in the RNA and favors formation of a downstream transcription terminator, leading to a reduced expression of downstream genes. Also displays a weak uracil phosphoribosyltransferase activity which is not physiologically significant. This chain is Bifunctional protein PyrR, found in Caldicellulosiruptor bescii (strain ATCC BAA-1888 / DSM 6725 / KCTC 15123 / Z-1320) (Anaerocellum thermophilum).